The following is a 718-amino-acid chain: Interleukin-1 receptor-associated kinase 1 (718 aa).

In terms of domain architecture, Death spans 27-106 (MCRFYKVMDA…DIITAWHPPA (80 aa)). Residue T66 is modified to Phosphothreonine; by PKC/PRKCI. The segment at 110-211 (PPSTTSLTPS…LHEICQGTHD (102 aa)) is proST region. A Glycyl lysine isopeptide (Lys-Gly) (interchain with G-Cter in ubiquitin) cross-link involves residue K134. The interval 146–188 (AFPGSQTHSDPELCPGPSPAAHQPPLPSPAPSSTKPSPESPMS) is disordered. Residues 159-175 (CPGPSPAAHQPPLPSPA) show a composition bias toward pro residues. Residues 176 to 188 (PSSTKPSPESPMS) are compositionally biased toward low complexity. K180 participates in a covalent cross-link: Glycyl lysine isopeptide (Lys-Gly) (interchain with G-Cter in ubiquitin). Residue T209 is modified to Phosphothreonine; by IRAK4. The 310-residue stretch at 212 to 521 (FSEELKIGEG…TQVYQTLEEL (310 aa)) folds into the Protein kinase domain. ATP contacts are provided by residues 218-226 (IGEGGFGCV) and K239. D340 functions as the Proton acceptor in the catalytic mechanism. Residues 342–345 (KSSN) and D358 each bind ATP. S375 bears the Phosphoserine mark. The residue at position 387 (T387) is a Phosphothreonine. The interval 534–554 (AASRSPPSPQENSYVSTSGSA) is disordered. The span at 543 to 554 (QENSYVSTSGSA) shows a compositional bias: polar residues. Position 556 is a phosphoserine (S556). Disordered stretches follow at residues 569 to 594 (GAQA…SVSD), 631 to 662 (GAAR…SSRP), and 692 to 718 (LSSS…EFRS). Low complexity predominate over residues 692 to 703 (LSSSSLPDSGQD). Residues 704–718 (LQDRQGPEERDEFRS) are compositionally biased toward basic and acidic residues.

Belongs to the protein kinase superfamily. TKL Ser/Thr protein kinase family. Pelle subfamily. As to quaternary structure, homodimer. Forms a complex with TRAF6, PELI1, IRAK4 and MYD88. Direct binding of SMAD6 to PELI1 prevents complex formation and hence negatively regulates IL1R-TLR signaling and eventually NF-kappa-B-mediated gene expression. The TRAF6-PELI1-IRAK1-IRAK4-MYD88 complex recruits MAP3K7/TAK1, TAB1 and TAB2 to mediate NF-kappa-B activation. Interaction with MYD88 recruits IRAK1 to the stimulated receptor complex. Interacts with TOLLIP; this interaction occurs in the cytosol prior to receptor activation. Interacts with IL1RL1. Interacts (when polyubiquitinated) with IKBKG/NEMO. Interacts with RSAD2/viperin. Interacts with IRAK1BP1. Interacts with PELI2. Interacts with ZC3H12A; this interaction increases the interaction between ZC3H12A and IKBKB/IKKB. Interacts with IRAK4. Interacts with PELI3. Interacts with PELI1 and TRAF6. Interacts with INAVA; the interaction takes place upon PRR stimulation. Interacts (via C-terminus) with NFATC4 (via N-terminus). It depends on Mg(2+) as a cofactor. Following recruitment on the activated receptor complex, phosphorylated on Thr-209, probably by IRAK4, resulting in a conformational change of the kinase domain, allowing further phosphorylations to take place. Thr-387 phosphorylation in the activation loop is required to achieve full enzymatic activity. Post-translationally, polyubiquitinated by TRAF6 after cell stimulation with IL-1-beta by PELI1, PELI2 and PELI3. Polyubiquitination occurs with polyubiquitin chains linked through 'Lys-63'. Ubiquitination promotes interaction with NEMO/IKBKG. Also sumoylated; leading to nuclear translocation.

It is found in the cytoplasm. The protein localises to the nucleus. The protein resides in the lipid droplet. The enzyme catalyses L-seryl-[protein] + ATP = O-phospho-L-seryl-[protein] + ADP + H(+). It catalyses the reaction L-threonyl-[protein] + ATP = O-phospho-L-threonyl-[protein] + ADP + H(+). Functionally, serine/threonine-protein kinase that plays a critical role in initiating innate immune response against foreign pathogens. Involved in Toll-like receptor (TLR) and IL-1R signaling pathways. Is rapidly recruited by MYD88 to the receptor-signaling complex upon TLR activation. Association with MYD88 leads to IRAK1 phosphorylation by IRAK4 and subsequent autophosphorylation and kinase activation. Phosphorylates E3 ubiquitin ligases Pellino proteins (PELI1, PELI2 and PELI3) to promote pellino-mediated polyubiquitination of IRAK1. Then, the ubiquitin-binding domain of IKBKG/NEMO binds to polyubiquitinated IRAK1 bringing together the IRAK1-MAP3K7/TAK1-TRAF6 complex and the NEMO-IKKA-IKKB complex. In turn, MAP3K7/TAK1 activates IKKs (CHUK/IKKA and IKBKB/IKKB) leading to NF-kappa-B nuclear translocation and activation. Alternatively, phosphorylates TIRAP to promote its ubiquitination and subsequent degradation. Phosphorylates the interferon regulatory factor 7 (IRF7) to induce its activation and translocation to the nucleus, resulting in transcriptional activation of type I IFN genes, which drive the cell in an antiviral state. When sumoylated, translocates to the nucleus and phosphorylates STAT3. The protein is Interleukin-1 receptor-associated kinase 1 (IRAK1) of Bos taurus (Bovine).